The sequence spans 368 residues: Probable endopolygalacturonase I (368 aa).

Residues 1 to 18 (MHSYQLLGLAAVGSLVSA) form the signal peptide. A propeptide spanning residues 19-31 (APAPSRVSEFAKK) is cleaved from the precursor. An intrachain disulfide couples Cys-35 to Cys-50. PbH1 repeat units lie at residues 140–161 (VEDS…ISVQ), 162–192 (ATNV…DISE), and 193–214 (STGV…AINS). The Proton donor role is filled by Asp-207. A disulfide bond links Cys-209 and Cys-225. Residue His-229 is part of the active site. 3 PbH1 repeats span residues 244-265 (VKNV…RIKT), 273-295 (VSEI…VIEQ), and 307-352 (STGI…DLSG). The N-linked (GlcNAc...) asparagine glycan is linked to Asn-246. Cystine bridges form between Cys-335–Cys-340 and Cys-359–Cys-368.

The protein belongs to the glycosyl hydrolase 28 family.

Its subcellular location is the secreted. It catalyses the reaction (1,4-alpha-D-galacturonosyl)n+m + H2O = (1,4-alpha-D-galacturonosyl)n + (1,4-alpha-D-galacturonosyl)m.. Functionally, involved in maceration and soft-rotting of plant tissue. Hydrolyzes the 1,4-alpha glycosidic bonds of de-esterified pectate in the smooth region of the plant cell wall. The chain is Probable endopolygalacturonase I (pgaI) from Aspergillus niger (strain ATCC MYA-4892 / CBS 513.88 / FGSC A1513).